Here is a 349-residue protein sequence, read N- to C-terminus: Glycosyltransferase 8 domain-containing protein 2 (349 aa).

Residues 1 to 6 (MALLRK) lie on the Cytoplasmic side of the membrane. Residues 7 to 24 (INQVLLFLLIVTLCVILY) traverse the membrane as a helical; Signal-anchor for type II membrane protein segment. At 25-349 (KKVHKGTVSK…AGIFKLNHHS (325 aa)) the chain is on the lumenal side. Residue asparagine 234 is glycosylated (N-linked (GlcNAc...) asparagine).

It belongs to the glycosyltransferase 8 family.

Its subcellular location is the membrane. The protein is Glycosyltransferase 8 domain-containing protein 2 (GLT8D2) of Macaca fascicularis (Crab-eating macaque).